The sequence spans 190 residues: Fe/S biogenesis protein NfuA (190 aa).

[4Fe-4S] cluster is bound by residues Cys148 and Cys151.

This sequence belongs to the NfuA family. As to quaternary structure, homodimer. The cofactor is [4Fe-4S] cluster.

Involved in iron-sulfur cluster biogenesis. Binds a 4Fe-4S cluster, can transfer this cluster to apoproteins, and thereby intervenes in the maturation of Fe/S proteins. Could also act as a scaffold/chaperone for damaged Fe/S proteins. The protein is Fe/S biogenesis protein NfuA of Baumannia cicadellinicola subsp. Homalodisca coagulata.